The chain runs to 137 residues: Nucleoside diphosphate kinase (137 aa).

The ATP site is built by Lys9, Phe57, Arg85, Thr91, Arg102, and Asn112. The Pros-phosphohistidine intermediate role is filled by His115.

The protein belongs to the NDK family. In terms of assembly, homotetramer. Requires Mg(2+) as cofactor.

Its subcellular location is the cytoplasm. The enzyme catalyses a 2'-deoxyribonucleoside 5'-diphosphate + ATP = a 2'-deoxyribonucleoside 5'-triphosphate + ADP. It catalyses the reaction a ribonucleoside 5'-diphosphate + ATP = a ribonucleoside 5'-triphosphate + ADP. Major role in the synthesis of nucleoside triphosphates other than ATP. The ATP gamma phosphate is transferred to the NDP beta phosphate via a ping-pong mechanism, using a phosphorylated active-site intermediate. The chain is Nucleoside diphosphate kinase from Nitratiruptor sp. (strain SB155-2).